A 106-amino-acid chain; its full sequence is Ribosomal processing cysteine protease Prp (106 aa).

The Proton donor role is filled by H22. C34 (nucleophile) is an active-site residue.

Belongs to the Prp family. As to quaternary structure, homodimer. A mutant protein unable to cleave bL27 copurifies with its substrate.

Not inhibited by short peptide analogs; a 6-mer inhibits only 20% while a 13-mer inhibits 63%. Inhibited by Ac-KLNLQFF-CH(2) which binds covalantly to Cys-34. Inhibited by mersalyl acid (C13H18HgNO6). Functionally, an essential cysteine protease that cleaves the N-terminal 9 amino acids from ribosomal protein bL27. Also acts as an N-terminal protease on the major capsid and scaffold assembly proteins of bacteriophage 80alpha. Cleavage of the N-terminus of bL27 (and thus this enzyme) is essential for growth; it cannot be replaced by a 'pre-cleaved' or non-cleavable form of bL27. Might serve a chaperone function during ribosome assembly. This Staphylococcus aureus (strain NCTC 8325 / PS 47) protein is Ribosomal processing cysteine protease Prp.